Here is an 855-residue protein sequence, read N- to C-terminus: Axonemal dynein light chain domain-containing protein 1 (855 aa).

Over residues 1 to 17 (MSLPKTPSTPLNSASTS) the composition is skewed to polar residues. The tract at residues 1–31 (MSLPKTPSTPLNSASTSESKKLVSVATEGTR) is disordered. 3 coiled-coil regions span residues 316 to 402 (QRIL…WSSA), 451 to 480 (LQKL…RETL), and 571 to 596 (SERQ…RING).

The protein resides in the cytoplasm. Its function is as follows. May be essential for spermiogenesis and male fertility probably by regulating the manchette dynamics, spermatid head shaping and sperm flagellum assembly. The sequence is that of Axonemal dynein light chain domain-containing protein 1 (AXDND1) from Macaca fascicularis (Crab-eating macaque).